The primary structure comprises 212 residues: Deoxyribose-phosphate aldolase (212 aa).

D89 acts as the Proton donor/acceptor in catalysis. The active-site Schiff-base intermediate with acetaldehyde is K151. K180 serves as the catalytic Proton donor/acceptor.

It belongs to the DeoC/FbaB aldolase family. DeoC type 1 subfamily.

The protein resides in the cytoplasm. It carries out the reaction 2-deoxy-D-ribose 5-phosphate = D-glyceraldehyde 3-phosphate + acetaldehyde. It functions in the pathway carbohydrate degradation; 2-deoxy-D-ribose 1-phosphate degradation; D-glyceraldehyde 3-phosphate and acetaldehyde from 2-deoxy-alpha-D-ribose 1-phosphate: step 2/2. Functionally, catalyzes a reversible aldol reaction between acetaldehyde and D-glyceraldehyde 3-phosphate to generate 2-deoxy-D-ribose 5-phosphate. The protein is Deoxyribose-phosphate aldolase of Clostridium botulinum (strain Loch Maree / Type A3).